A 251-amino-acid polypeptide reads, in one-letter code: Hydroxyacylglutathione hydrolase (251 aa).

Residues His-53, His-55, Asp-57, His-58, His-110, Asp-127, and His-165 each coordinate Zn(2+).

The protein belongs to the metallo-beta-lactamase superfamily. Glyoxalase II family. In terms of assembly, monomer. The cofactor is Zn(2+).

It catalyses the reaction an S-(2-hydroxyacyl)glutathione + H2O = a 2-hydroxy carboxylate + glutathione + H(+). Its pathway is secondary metabolite metabolism; methylglyoxal degradation; (R)-lactate from methylglyoxal: step 2/2. Functionally, thiolesterase that catalyzes the hydrolysis of S-D-lactoyl-glutathione to form glutathione and D-lactic acid. This chain is Hydroxyacylglutathione hydrolase, found in Salmonella gallinarum (strain 287/91 / NCTC 13346).